The chain runs to 414 residues: MSGIIATYLIHDDSHNLEKKAEQIALGLTIGSWTHLPHLLQEQLKQHKGNVLHVEELAEHEHTNSYLRKKVKRGIIKIEYPLLNFSPDLPAILTTTFGKLSLDGEVKLIDLTFSDELKKHFPGPKFGIDGIRNLLQVHDRPLLMSIFKGMIGRNIGYLKTQLRDQAIGGVDIVKDDEILFENALTPLTKRIVSGKEVLQSVYETYGHKTLYAVNVTGRTFDLKENAKRAVQAGADILLFNVFAYGLDVLQSLAEDDEIPVPIMAHPAVSGAYSASKLYGISSPLLLGKLLRYAGADFSLFPSPYGSVALEKEEALAISKYLTEDDVFFKKSFSVPSAGIHPGFVPFIIRDFGKDVVINAGGGIHGHPNGAQGGGKAFRTAIDATLQNKPLHEVDDINLHSALQIWGNPSHEVKL.

Residue K99 is the Proton acceptor of the active site. Substrate contacts are provided by residues K148, 174 to 177 (KDDE), H265, G338, and 360 to 361 (GG). Residues K174, D176, and E177 each coordinate Mg(2+). K174 bears the N6-carboxylysine mark.

Belongs to the RuBisCO large chain family. Type IV subfamily. As to quaternary structure, homodimer. It depends on Mg(2+) as a cofactor.

It catalyses the reaction 5-methylsulfanyl-2,3-dioxopentyl phosphate = 2-hydroxy-5-methylsulfanyl-3-oxopent-1-enyl phosphate. It functions in the pathway amino-acid biosynthesis; L-methionine biosynthesis via salvage pathway; L-methionine from S-methyl-5-thio-alpha-D-ribose 1-phosphate: step 3/6. In terms of biological role, catalyzes the enolization of 2,3-diketo-5-methylthiopentyl-1-phosphate (DK-MTP-1-P) into 2-hydroxy-3-keto-5-methylthiopentenyl-1-phosphate (HK-MTPenyl-1-P). The polypeptide is 2,3-diketo-5-methylthiopentyl-1-phosphate enolase (Bacillus cereus (strain AH820)).